The primary structure comprises 375 residues: Cobalt-precorrin-5B C(1)-methyltransferase (375 aa).

Belongs to the CbiD family.

The catalysed reaction is Co-precorrin-5B + S-adenosyl-L-methionine = Co-precorrin-6A + S-adenosyl-L-homocysteine. Its pathway is cofactor biosynthesis; adenosylcobalamin biosynthesis; cob(II)yrinate a,c-diamide from sirohydrochlorin (anaerobic route): step 6/10. In terms of biological role, catalyzes the methylation of C-1 in cobalt-precorrin-5B to form cobalt-precorrin-6A. In Fusobacterium nucleatum subsp. nucleatum (strain ATCC 25586 / DSM 15643 / BCRC 10681 / CIP 101130 / JCM 8532 / KCTC 2640 / LMG 13131 / VPI 4355), this protein is Cobalt-precorrin-5B C(1)-methyltransferase.